A 70-amino-acid chain; its full sequence is ATP synthase subunit c (70 aa).

Transmembrane regions (helical) follow at residues 4–24 and 45–65; these read IAAA…NGLI and LMFI…VIAF.

Belongs to the ATPase C chain family. As to quaternary structure, F-type ATPases have 2 components, F(1) - the catalytic core - and F(0) - the membrane proton channel. F(1) has five subunits: alpha(3), beta(3), gamma(1), delta(1), epsilon(1). F(0) has three main subunits: a(1), b(2) and c(10-14). The alpha and beta chains form an alternating ring which encloses part of the gamma chain. F(1) is attached to F(0) by a central stalk formed by the gamma and epsilon chains, while a peripheral stalk is formed by the delta and b chains.

It localises to the cell membrane. Functionally, f(1)F(0) ATP synthase produces ATP from ADP in the presence of a proton or sodium gradient. F-type ATPases consist of two structural domains, F(1) containing the extramembraneous catalytic core and F(0) containing the membrane proton channel, linked together by a central stalk and a peripheral stalk. During catalysis, ATP synthesis in the catalytic domain of F(1) is coupled via a rotary mechanism of the central stalk subunits to proton translocation. This Bacillus pumilus (strain SAFR-032) protein is ATP synthase subunit c.